Reading from the N-terminus, the 212-residue chain is Adenylate kinase (212 aa).

10 to 15 (GAGKGT) provides a ligand contact to ATP. The tract at residues 30–59 (AIGDIFRTIIKTSTSEAELINNYVRQGELI) is NMP. Residues Arg-36, 57–59 (ELI), 85–88 (GYPR), and Gln-92 contribute to the AMP site. The tract at residues 122-160 (GRYSCKNCGKIYNRYFLQPKTDNVCDVCGSSTFDYRKDD) is LID. Arg-123 contacts ATP. Positions 126 and 129 each coordinate Zn(2+). Position 132–133 (132–133 (IY)) interacts with ATP. Residues Cys-146 and Cys-149 each contribute to the Zn(2+) site. Residues Arg-157 and Arg-168 each contribute to the AMP site. Lys-196 is a binding site for ATP.

The protein belongs to the adenylate kinase family. In terms of assembly, monomer.

It is found in the cytoplasm. It catalyses the reaction AMP + ATP = 2 ADP. The protein operates within purine metabolism; AMP biosynthesis via salvage pathway; AMP from ADP: step 1/1. Functionally, catalyzes the reversible transfer of the terminal phosphate group between ATP and AMP. Plays an important role in cellular energy homeostasis and in adenine nucleotide metabolism. The chain is Adenylate kinase from Rickettsia peacockii (strain Rustic).